The chain runs to 176 residues: NAD(P)H-quinone oxidoreductase subunit 6, chloroplastic (176 aa).

A run of 5 helical transmembrane segments spans residues 10-30 (FLLV…ILFT), 33-53 (IFSA…YIIA), 61-81 (AQLL…VMFI), 92-112 (LFTL…FLLI), and 152-172 (FFPP…GAIA).

Belongs to the complex I subunit 6 family. In terms of assembly, NDH is composed of at least 16 different subunits, 5 of which are encoded in the nucleus.

The protein resides in the plastid. The protein localises to the chloroplast thylakoid membrane. The catalysed reaction is a plastoquinone + NADH + (n+1) H(+)(in) = a plastoquinol + NAD(+) + n H(+)(out). The enzyme catalyses a plastoquinone + NADPH + (n+1) H(+)(in) = a plastoquinol + NADP(+) + n H(+)(out). Its function is as follows. NDH shuttles electrons from NAD(P)H:plastoquinone, via FMN and iron-sulfur (Fe-S) centers, to quinones in the photosynthetic chain and possibly in a chloroplast respiratory chain. The immediate electron acceptor for the enzyme in this species is believed to be plastoquinone. Couples the redox reaction to proton translocation, and thus conserves the redox energy in a proton gradient. This is NAD(P)H-quinone oxidoreductase subunit 6, chloroplastic (ndhG) from Fagopyrum esculentum subsp. ancestrale (Wild buckwheat).